We begin with the raw amino-acid sequence, 153 residues long: uncharacterized protein (153 aa).

This is an uncharacterized protein from Alkalihalophilus pseudofirmus (strain ATCC BAA-2126 / JCM 17055 / OF4) (Bacillus pseudofirmus).